Reading from the N-terminus, the 1355-residue chain is Probable aldehyde oxidase 2 (1355 aa).

One can recognise a 2Fe-2S ferredoxin-type domain in the interval 9–96; sequence RPVVVTVNGE…HCAVTTSEGI (88 aa). Residues Cys48, Cys53, Cys56, and Cys78 each coordinate [2Fe-2S] cluster. The FAD-binding PCMH-type domain maps to 244-422; sequence VAVTGDGWFH…VSISIPDWGS (179 aa). A disordered region spans residues 544-577; sequence PENANVPNGSCTNGTANGSANSSPEKHSNVDSSD. Positions 548–566 are enriched in polar residues; sequence NVPNGSCTNGTANGSANSS.

The protein belongs to the xanthine dehydrogenase family. As to quaternary structure, aldehyde oxidases (AO) are homodimers and heterodimers of AO subunits. It depends on [2Fe-2S] cluster as a cofactor. FAD is required as a cofactor. The cofactor is Mo-molybdopterin.

It carries out the reaction an aldehyde + O2 + H2O = a carboxylate + H2O2 + H(+). This is Probable aldehyde oxidase 2 from Oryza sativa subsp. japonica (Rice).